A 238-amino-acid polypeptide reads, in one-letter code: Type III pantothenate kinase (238 aa).

Residue 6–13 (DSGNTRIK) participates in ATP binding. Substrate is bound by residues Tyr90 and 97–100 (GVDR). Asp99 (proton acceptor) is an active-site residue. Position 122 (Thr122) interacts with ATP. Thr172 lines the substrate pocket.

The protein belongs to the type III pantothenate kinase family. As to quaternary structure, homodimer. NH4(+) serves as cofactor. It depends on K(+) as a cofactor.

The protein resides in the cytoplasm. The catalysed reaction is (R)-pantothenate + ATP = (R)-4'-phosphopantothenate + ADP + H(+). Its pathway is cofactor biosynthesis; coenzyme A biosynthesis; CoA from (R)-pantothenate: step 1/5. Functionally, catalyzes the phosphorylation of pantothenate (Pan), the first step in CoA biosynthesis. The chain is Type III pantothenate kinase from Dechloromonas aromatica (strain RCB).